A 140-amino-acid chain; its full sequence is Transcriptional regulator YdaT (140 aa).

Functionally, transcriptional regulator that causes a severe detrimental growth effect and reduces cell viability. When expressed, it alters expression of a variety of bacterial regulons normally controlled by the transcriptional regulatory protein RcsA, resulting in deficient lipopolysaccharide biosynthesis and cell division. YdaT has no effect on Rac prophage excision. Overexpression of ydaST reduces growth and leads to loss of cell viability. May contribute to toxicity and morphological defects. This is Transcriptional regulator YdaT (ydaT) from Escherichia coli (strain K12).